Reading from the N-terminus, the 43-residue chain is Hemolysin H1U (43 aa).

The residue at position 1 (Met-1) is an N-formylmethionine.

The protein belongs to the staphylococcal hemolytic protein family.

It localises to the secreted. Its function is as follows. Virulence factor. Causes hemolysis of erythrocytes. Acts synergistically with beta-hemolysins from S.aureus ATCC 25923. Cytotoxic towards human dermal fibroblasts. In Staphylococcus ureilyticus (Staphylococcus cohnii subsp. urealyticus), this protein is Hemolysin H1U.